The sequence spans 862 residues: Probable alpha,alpha-trehalose-phosphate synthase [UDP-forming] 11 (862 aa).

Phosphoserine is present on Ser5. The glycosyltransferase stretch occupies residues 50–538; that stretch reads PKRIVVSNQL…ARSYDQDLQR (489 aa). Positions 838–862 are disordered; it reads SKHEQQKKQSKFTFQQPMGQCRKKA.

In the N-terminal section; belongs to the glycosyltransferase 20 family. It in the C-terminal section; belongs to the trehalose phosphatase family. Expressed in leaves, roots, stems and flowers.

It carries out the reaction D-glucose 6-phosphate + UDP-alpha-D-glucose = alpha,alpha-trehalose 6-phosphate + UDP + H(+). The protein is Probable alpha,alpha-trehalose-phosphate synthase [UDP-forming] 11 (TPS11) of Arabidopsis thaliana (Mouse-ear cress).